Reading from the N-terminus, the 625-residue chain is MSNKQNTAVQEFEYKAEMKQLLDLIVHSLYTHPEIFLRELVSNASDALSKARFSALTDDTMAKVSGEAAIRISLDAKTAAFAIEDTGIGMTEEELIANLGTVARSGTLGFMQALRQEKKELDGNLIGQFGVGFYSVFMVTDDVTVETRSARAGSEGLRWRSSGQGTYTIEKIDKKEPGTRISFTLKDEHKEFAEEYRVEHIIKKYSNFVDFPIYLETKQLNSITALWQRPKSELKQEEVNEFYKFISNDFNEPLDYLHVSVEGAVSFKAILFLPKEAPMELLYRQGELENKGPQLYVKKVMIQHECRDLLPEYLRFIAGVVDTEDLSLNVSREIVQSSPVMSKIRQILTGKILGWFEELATAQPEKFRTFYKAFGPIVKIGLNTDFTNRDKLIELLRFESTKTGEGEYVTLKEYAARMAPDQKEIYYHSGAGRAQLLANPNLEYFQDKGIEVLLLSDPVDVFVIPSIHEYDKKQLKSIEKADIDFSKATKDKTEPIAENLLVPLLKIFRETLGEGIEDVVESHRLVSSPVTLVSGKDAMDSQMERMMKMMQQEMPAGRKILEVNPSHPIIRNLSGMMMANDNNPLIRTAIHQLYEGALLLEGGLDSTTGFVSRMNELIEAATLSR.

The tract at residues 1–332 is a; substrate-binding; that stretch reads MSNKQNTAVQ…TEDLSLNVSR (332 aa). Residues 333–545 form a b region; it reads EIVQSSPVMS…KDAMDSQMER (213 aa). The interval 546 to 625 is c; sequence MMKMMQQEMP…ELIEAATLSR (80 aa).

The protein belongs to the heat shock protein 90 family. In terms of assembly, homodimer.

Its subcellular location is the cytoplasm. Its function is as follows. Molecular chaperone. Has ATPase activity. The sequence is that of Chaperone protein HtpG from Chlorobium luteolum (strain DSM 273 / BCRC 81028 / 2530) (Pelodictyon luteolum).